Here is an 81-residue protein sequence, read N- to C-terminus: Protein PYP1 (81 aa).

Residues 1–25 (MAFVSGFTGMPVTARVSKAVCRTRM) constitute a chloroplast transit peptide. The segment at 27–57 (LEGGKSSGGGEATRDPEPTAVDPNDPKGKQQ) is disordered.

It localises to the plastid. Its subcellular location is the chloroplast. The chain is Protein PYP1 from Pyropia yezoensis (Susabi-nori).